The following is a 245-amino-acid chain: MALKFTTAEGQAITPITVPVMREIDRLAVQETGPNLYQMMENAGRNLAELTLTLLGESRNGSRVLVLAGTGGNGGGGLCAGRHLANHGLAVDYTLGDRDGLSEVTGRQLSLLELAGGREVDPVSPETGEADIVLDALIGYSLLGAPSGRSAELIRWLNAGNSRIISLDVPSGVDADSGLTPGEYVRPQTTLTLAWPKTGLLPRLTGELWLGDLGIPPAVYTRAGLKNFRSPFIAGYLVRLTASEQ.

The YjeF N-terminal domain occupies 21-221 (MREIDRLAVQ…DLGIPPAVYT (201 aa)). Residue 72–76 (GNGGG) coordinates (6S)-NADPHX. K(+) is bound by residues Asn73 and Asp135. (6S)-NADPHX is bound by residues 139-145 (GYSLLGA) and Asp168. K(+) is bound at residue Ser171.

It belongs to the NnrE/AIBP family. It depends on K(+) as a cofactor.

The catalysed reaction is (6R)-NADHX = (6S)-NADHX. It catalyses the reaction (6R)-NADPHX = (6S)-NADPHX. In terms of biological role, catalyzes the epimerization of the S- and R-forms of NAD(P)HX, a damaged form of NAD(P)H that is a result of enzymatic or heat-dependent hydration. This is a prerequisite for the S-specific NAD(P)H-hydrate dehydratase to allow the repair of both epimers of NAD(P)HX. The protein is NAD(P)H-hydrate epimerase of Dehalogenimonas lykanthroporepellens (strain ATCC BAA-1523 / JCM 15061 / BL-DC-9).